Consider the following 296-residue polypeptide: Putative ankyrin repeat protein FPV216 (296 aa).

ANK repeat units follow at residues 73 to 102 (SYVNPLIYAIECDNHDAILSLIRYGADVNT) and 107 to 136 (LVITPLYISVLHGCPKCVEILLYYGANINI).

This is Putative ankyrin repeat protein FPV216 from Fowlpox virus (strain NVSL) (FPV).